Reading from the N-terminus, the 151-residue chain is 3-dehydroquinate dehydratase (151 aa).

Tyrosine 24 functions as the Proton acceptor in the catalytic mechanism. Residues asparagine 76, histidine 82, and aspartate 89 each coordinate substrate. Catalysis depends on histidine 102, which acts as the Proton donor. Substrate contacts are provided by residues 103–104 (LS) and arginine 113.

Belongs to the type-II 3-dehydroquinase family. As to quaternary structure, homododecamer.

It catalyses the reaction 3-dehydroquinate = 3-dehydroshikimate + H2O. It participates in metabolic intermediate biosynthesis; chorismate biosynthesis; chorismate from D-erythrose 4-phosphate and phosphoenolpyruvate: step 3/7. Catalyzes a trans-dehydration via an enolate intermediate. This chain is 3-dehydroquinate dehydratase, found in Acinetobacter baumannii (strain AB307-0294).